We begin with the raw amino-acid sequence, 293 residues long: 4-hydroxy-tetrahydrodipicolinate synthase (293 aa).

Thr47 contributes to the pyruvate binding site. Tyr136 functions as the Proton donor/acceptor in the catalytic mechanism. The active-site Schiff-base intermediate with substrate is the Lys164. Ile206 serves as a coordination point for pyruvate.

Belongs to the DapA family. As to quaternary structure, homotetramer; dimer of dimers.

Its subcellular location is the cytoplasm. The enzyme catalyses L-aspartate 4-semialdehyde + pyruvate = (2S,4S)-4-hydroxy-2,3,4,5-tetrahydrodipicolinate + H2O + H(+). It participates in amino-acid biosynthesis; L-lysine biosynthesis via DAP pathway; (S)-tetrahydrodipicolinate from L-aspartate: step 3/4. Its function is as follows. Catalyzes the condensation of (S)-aspartate-beta-semialdehyde [(S)-ASA] and pyruvate to 4-hydroxy-tetrahydrodipicolinate (HTPA). In Listeria monocytogenes serovar 1/2a (strain ATCC BAA-679 / EGD-e), this protein is 4-hydroxy-tetrahydrodipicolinate synthase.